A 178-amino-acid chain; its full sequence is NAD(P)H-quinone oxidoreductase subunit J (178 aa).

The protein belongs to the complex I 30 kDa subunit family. NDH-1 can be composed of about 15 different subunits; different subcomplexes with different compositions have been identified which probably have different functions.

It localises to the cellular thylakoid membrane. The enzyme catalyses a plastoquinone + NADH + (n+1) H(+)(in) = a plastoquinol + NAD(+) + n H(+)(out). It catalyses the reaction a plastoquinone + NADPH + (n+1) H(+)(in) = a plastoquinol + NADP(+) + n H(+)(out). Its function is as follows. NDH-1 shuttles electrons from an unknown electron donor, via FMN and iron-sulfur (Fe-S) centers, to quinones in the respiratory and/or the photosynthetic chain. The immediate electron acceptor for the enzyme in this species is believed to be plastoquinone. Couples the redox reaction to proton translocation, and thus conserves the redox energy in a proton gradient. Cyanobacterial NDH-1 also plays a role in inorganic carbon-concentration. In Crocosphaera subtropica (strain ATCC 51142 / BH68) (Cyanothece sp. (strain ATCC 51142)), this protein is NAD(P)H-quinone oxidoreductase subunit J.